Consider the following 209-residue polypeptide: Redox-sensing transcriptional repressor Rex (209 aa).

Positions 16–55 (VYIQVLTGLKRDGVEVISSEKLARACSVNPSQIRKDLAYF) form a DNA-binding region, H-T-H motif. NAD(+) is bound at residue 90–95 (GVGNLG).

Belongs to the transcriptional regulatory Rex family. As to quaternary structure, homodimer.

It is found in the cytoplasm. In terms of biological role, modulates transcription in response to changes in cellular NADH/NAD(+) redox state. The polypeptide is Redox-sensing transcriptional repressor Rex (Maridesulfovibrio salexigens (strain ATCC 14822 / DSM 2638 / NCIMB 8403 / VKM B-1763) (Desulfovibrio salexigens)).